The chain runs to 592 residues: Malic enzyme, hydrogenosomal (592 aa).

A hydrogenosome-targeting transit peptide spans 1-27 (MLAPIQTIARPVSSILPATGALAAKRT). Y134 (proton donor) is an active-site residue. An NADP(+)-binding site is contributed by 182–205 (VTDGSRILGLGDLGAGGMQIPIGK). R187 contributes to the NAD(+) binding site. The active-site Proton acceptor is K205. A divalent metal cation is bound by residues E276, D277, and D300. D300 is a binding site for NAD(+). 335–352 (GAGSSGVGVCETIVDCIV) lines the NADP(+) pocket. N443 contributes to the NAD(+) binding site.

It belongs to the malic enzymes family. Mg(2+) serves as cofactor. Requires Mn(2+) as cofactor.

The protein localises to the hydrogenosome. The catalysed reaction is (S)-malate + NADP(+) = pyruvate + CO2 + NADPH. It catalyses the reaction oxaloacetate + H(+) = pyruvate + CO2. The protein is Malic enzyme, hydrogenosomal of Neocallimastix frontalis (Rumen fungus).